The following is a 285-amino-acid chain: Malonyl-[acyl-carrier protein] O-methyltransferase (285 aa).

The protein belongs to the methyltransferase superfamily.

It catalyses the reaction malonyl-[ACP] + S-adenosyl-L-methionine = malonyl-[ACP] methyl ester + S-adenosyl-L-homocysteine. It functions in the pathway cofactor biosynthesis; biotin biosynthesis. In terms of biological role, converts the free carboxyl group of a malonyl-thioester to its methyl ester by transfer of a methyl group from S-adenosyl-L-methionine (SAM). It allows to synthesize pimeloyl-ACP via the fatty acid synthetic pathway. The sequence is that of Malonyl-[acyl-carrier protein] O-methyltransferase from Bacillus cytotoxicus (strain DSM 22905 / CIP 110041 / 391-98 / NVH 391-98).